Reading from the N-terminus, the 180-residue chain is uncharacterized protein (180 aa).

The first 21 residues, 1 to 21, serve as a signal peptide directing secretion; sequence MKQCIAFMAILALSLSAISEA. The segment at 23–81 is disordered; the sequence is GGRGVRSSGYSRPVATKPAPAPKQTQTQQQSQQPDATFGQQNMQNTATNTPNNPNNRLA. A compositionally biased stretch (low complexity) spans 27–78; sequence VRSSGYSRPVATKPAPAPKQTQTQQQSQQPDATFGQQNMQNTATNTPNNPNN.

This is an uncharacterized protein from Pasteurella multocida (strain Pm70).